The following is a 407-amino-acid chain: Putative polysaccharide ligase RF_0568 (407 aa).

The next 10 membrane-spanning stretches (helical) occupy residues 15–35 (LGMV…LMLF), 71–91 (MTIK…LFAI), 100–120 (FIQV…VPFG), 129–149 (LILG…SHGF), 166–186 (GCAL…SSGK), 203–223 (ISDS…FILA), 229–249 (IFFK…PVIA), 272–292 (LFIW…GYGF), 324–344 (ILQI…CLVY), and 379–399 (IWQI…KLLV).

Belongs to the O-antigen ligase family.

The protein resides in the membrane. In Rickettsia felis (strain ATCC VR-1525 / URRWXCal2) (Rickettsia azadi), this protein is Putative polysaccharide ligase RF_0568.